A 277-amino-acid polypeptide reads, in one-letter code: Large ribosomal subunit protein uL2c (277 aa).

The interval Met225–Val277 is disordered. Residues Leu255–Val277 show a composition bias toward basic residues.

This sequence belongs to the universal ribosomal protein uL2 family. In terms of assembly, part of the 50S ribosomal subunit.

The protein localises to the plastid. It is found in the chloroplast. The chain is Large ribosomal subunit protein uL2c (rpl2) from Euglena gracilis.